Reading from the N-terminus, the 202-residue chain is Heart- and neural crest derivatives-expressed protein 1 (202 aa).

Positions 83 to 135 constitute a bHLH domain; that stretch reads RKGVGGPKKERRRTESINSAFAELRECIPNVPADTKLSKIKTLRLATSYIAYL. A disordered region spans residues 143-187; sequence SQPGEPEGFKAELKKADGRENKRKRETQPEVYSQPLAHGEKKLKG. A compositionally biased stretch (basic and acidic residues) spans 149–162; the sequence is EGFKAELKKADGRE.

In terms of assembly, efficient DNA binding requires dimerization with another bHLH protein.

The protein localises to the nucleus. It is found in the nucleoplasm. It localises to the nucleolus. Transcription factor. Plays an essential role in cardiac morphogenesis. This Gallus gallus (Chicken) protein is Heart- and neural crest derivatives-expressed protein 1 (HAND1).